We begin with the raw amino-acid sequence, 136 residues long: Protein PsiE homolog (136 aa).

Helical transmembrane passes span 15-35 (ILQTVLNMGLLSLGLILVVFL), 55-75 (YELVEGLVVYFLYFEFIALIV), 82-102 (FHFPLRYFVYIGITAIVRLII), and 108-128 (PLDVLIYSAAILLLVITLWLC).

It belongs to the PsiE family.

The protein localises to the cell inner membrane. The sequence is that of Protein PsiE homolog from Enterobacter sp. (strain 638).